The primary structure comprises 121 residues: Neuromedin-B (121 aa).

The first 24 residues, 1 to 24 (MTRQAGSSWLLRGLLLFALFASGV), serve as a signal peptide directing secretion. Methionine 56 carries the post-translational modification Methionine amide. Positions 60–121 (SLEPPSLSLV…RRLLEPLLQK (62 aa)) are excised as a propeptide.

This sequence belongs to the bombesin/neuromedin-B/ranatensin family. In terms of tissue distribution, in the hindbrain, expressed in the medulla surrounding the lateral half of the facial nucleus. Also expressed in the olfactory bulb and hippocampus. Detected in a subset of neurons distributed throughout the retrotrapezoid nucleus/parafacial respiratory group (RTN/pFRG). Within the RTN/pFRG, expressed in neuronal subpopulations distinct from those expressing Grp. Expressed in lung.

The protein localises to the secreted. Its subcellular location is the cell projection. It localises to the neuron projection. In terms of biological role, stimulates smooth muscle contraction. Induces sighing by acting directly on the pre-Botzinger complex, a cluster of several thousand neurons in the ventrolateral medulla responsible for inspiration during respiratory activity. Contributes to the induction of sneezing following exposure to chemical irritants or allergens which causes release of NMB by nasal sensory neurons and activation of NMBR-expressing neurons in the sneeze-evoking region of the brainstem. These in turn activate neurons of the caudal ventral respiratory group, giving rise to the sneeze reflex. Contributes to induction of acute itch, possibly through activation of the NMBR receptor on dorsal root ganglion neurons. Increases expression of NMBR and steroidogenic mediators STAR, CYP11A1 and HSD3B1 in Leydig cells, induces secretion of testosterone by Leydig cells and also promotes Leydig cell proliferation. Plays a role in the innate immune response to influenza A virus infection by enhancing interferon alpha expression and reducing expression of IL6. Plays a role in CSF1-induced proliferation of osteoclast precursors by contributing to the positive regulation of the expression of the CSF1 receptor CSF1R. The polypeptide is Neuromedin-B (Nmb) (Mus musculus (Mouse)).